Consider the following 316-residue polypeptide: Haloacid dehalogenase-like hydrolase domain-containing protein At4g39970 (316 aa).

The transit peptide at 1–46 (MAVSCNHSAILFSPSSTAGSSSVTSSSSLIGFPRFQTLRFKSRSVY) directs the protein to the chloroplast. Aspartate 69 functions as the Nucleophile in the catalytic mechanism. Residues aspartate 69, aspartate 71, and aspartate 259 each contribute to the Mg(2+) site. Aspartate 71 (proton donor) is an active-site residue.

It belongs to the HAD-like hydrolase superfamily. DOG/GPP family. Mg(2+) serves as cofactor.

Its subcellular location is the plastid. It localises to the chloroplast. This chain is Haloacid dehalogenase-like hydrolase domain-containing protein At4g39970, found in Arabidopsis thaliana (Mouse-ear cress).